Consider the following 663-residue polypeptide: DNA ligase (663 aa).

NAD(+)-binding positions include 31–35, 80–81, and Glu110; these read DFEYD and SL. Lys112 functions as the N6-AMP-lysine intermediate in the catalytic mechanism. NAD(+)-binding residues include Arg133, Glu168, Lys284, and Lys308. The Zn(2+) site is built by Cys402, Cys405, Cys420, and Cys425. The BRCT domain occupies 586–663; that stretch reads IKDNRFEGKT…DEDKFRKMIE (78 aa).

This sequence belongs to the NAD-dependent DNA ligase family. LigA subfamily. Mg(2+) is required as a cofactor. Requires Mn(2+) as cofactor.

The enzyme catalyses NAD(+) + (deoxyribonucleotide)n-3'-hydroxyl + 5'-phospho-(deoxyribonucleotide)m = (deoxyribonucleotide)n+m + AMP + beta-nicotinamide D-nucleotide.. In terms of biological role, DNA ligase that catalyzes the formation of phosphodiester linkages between 5'-phosphoryl and 3'-hydroxyl groups in double-stranded DNA using NAD as a coenzyme and as the energy source for the reaction. It is essential for DNA replication and repair of damaged DNA. The protein is DNA ligase of Acetivibrio thermocellus (strain ATCC 27405 / DSM 1237 / JCM 9322 / NBRC 103400 / NCIMB 10682 / NRRL B-4536 / VPI 7372) (Clostridium thermocellum).